The primary structure comprises 656 residues: F-box/LRR-repeat protein 10 (656 aa).

Residues 20-66 (ERSLDLLPAALLETIMTKLDVASLCSLASTCKTLKSCVTRVLTFTPN) form the F-box domain. 16 LRR repeats span residues 71 to 96 (NVSLSMETVRPLLFPNQQLSSLKLDC), 120 to 145 (CRDFSGDLISEIGRKCKDLRLLCLGS), 151 to 176 (GRSISRCALEDLLNGCSHLEVLALMF), 194 to 221 (SDRLTHLELGHITSRMMTQLLTSTEISG), 243 to 268 (VDCITDAVVKAISKSLPSLIDLDIRD), 277 to 301 (VSDLTDFGLHEINQNGKLKHLSLIR), 310 to 335 (FRRVSDQGMLFLADKCLGMETICLGG), 336 to 361 (FCRVTDAGFKTILHSCASLSKFSIYH), 362 to 387 (GPKLTDLVFHDILATTLSLSHVSLRR), 388 to 412 (CHLLTDHAIQKLASSLKLENLDLRG), 413 to 437 (CRNLRDETLTAVSHLPKLKVLLLDG), 439 to 463 (DISDTGLSYLKEGVLDSLVSLSVRG), 464 to 491 (CRNLTDKFMSTLFDGSSKLALRELDLSN), 492 to 517 (LPNLTDAAIFALAKSGAPITKLQLRE), 518 to 551 (CRLIGDASVMALASTRVYEDECPGSSLCLLDLYD), and 552 to 578 (CGGITQLSFKWLKKPFFPRLKWLGITG). Residues 632-656 (ILGDEGDVEMEDAEDESEEDASEED) form a disordered region.

This is F-box/LRR-repeat protein 10 (FBL10) from Arabidopsis thaliana (Mouse-ear cress).